A 389-amino-acid polypeptide reads, in one-letter code: Lipid-A-disaccharide synthase (389 aa).

Belongs to the LpxB family.

The enzyme catalyses a lipid X + a UDP-2-N,3-O-bis[(3R)-3-hydroxyacyl]-alpha-D-glucosamine = a lipid A disaccharide + UDP + H(+). The protein operates within bacterial outer membrane biogenesis; LPS lipid A biosynthesis. Functionally, condensation of UDP-2,3-diacylglucosamine and 2,3-diacylglucosamine-1-phosphate to form lipid A disaccharide, a precursor of lipid A, a phosphorylated glycolipid that anchors the lipopolysaccharide to the outer membrane of the cell. This is Lipid-A-disaccharide synthase from Burkholderia ambifaria (strain MC40-6).